We begin with the raw amino-acid sequence, 487 residues long: Pentatricopeptide repeat-containing protein At5g61370, mitochondrial (487 aa).

Residues 1-90 (MMSTTVRLNR…TSPRRLLRFF (90 aa)) constitute a mitochondrion transit peptide. PPR repeat units follow at residues 137–171 (DKQTFSIVAETLVKVGKEEDAIGIFKILDKFSCPQ), 172–202 (DGFTVTAIISALCSRGHVKRALGVMHHHKDV), 207–241 (ELSVYRSLLFGWSVQRNVKEARRVIQDMKSAGITP), 242–283 (DLFC…KIQP), 284–318 (TSMSYNILLSCLGRTRRVRESCQILEQMKRSGCDP), 319–353 (DTGSYYFVVRVLYLTGRFGKGNQIVDEMIERGFRP), 354–388 (ERKFYYDLIGVLCGVERVNFALQLFEKMKRSSVGG), and 389–423 (YGQVYDLLIPKLCKGGNFEKGRELWEEALSIDVTL). The segment at 466-487 (TKPKLKLKPKRRSKTKKKNLQH) is disordered.

Belongs to the PPR family. P subfamily.

It is found in the mitochondrion. This Arabidopsis thaliana (Mouse-ear cress) protein is Pentatricopeptide repeat-containing protein At5g61370, mitochondrial.